The sequence spans 650 residues: Chaperone protein DnaK (650 aa).

A Phosphothreonine; by autocatalysis modification is found at Thr200. The segment covering 612–632 (GEGATAGAAAGAGAAGGQQAQ) has biased composition (low complexity). A disordered region spans residues 612 to 650 (GEGATAGAAAGAGAAGGQQAQPQDDNVVDAEFKEVNDKK). Basic and acidic residues predominate over residues 641 to 650 (AEFKEVNDKK).

It belongs to the heat shock protein 70 family.

Acts as a chaperone. The chain is Chaperone protein DnaK from Cupriavidus necator (strain ATCC 17699 / DSM 428 / KCTC 22496 / NCIMB 10442 / H16 / Stanier 337) (Ralstonia eutropha).